The sequence spans 304 residues: Methionyl-tRNA formyltransferase (304 aa).

110 to 113 (SLLP) provides a ligand contact to (6S)-5,6,7,8-tetrahydrofolate.

This sequence belongs to the Fmt family.

It catalyses the reaction L-methionyl-tRNA(fMet) + (6R)-10-formyltetrahydrofolate = N-formyl-L-methionyl-tRNA(fMet) + (6S)-5,6,7,8-tetrahydrofolate + H(+). Functionally, attaches a formyl group to the free amino group of methionyl-tRNA(fMet). The formyl group appears to play a dual role in the initiator identity of N-formylmethionyl-tRNA by promoting its recognition by IF2 and preventing the misappropriation of this tRNA by the elongation apparatus. This chain is Methionyl-tRNA formyltransferase, found in Sulfurovum sp. (strain NBC37-1).